Here is a 207-residue protein sequence, read N- to C-terminus: Thiamine-phosphate synthase (207 aa).

4-amino-2-methyl-5-(diphosphooxymethyl)pyrimidine is bound by residues 37–41 (QYRDK) and asparagine 69. Mg(2+) is bound by residues aspartate 70 and aspartate 89. Serine 108 contributes to the 4-amino-2-methyl-5-(diphosphooxymethyl)pyrimidine binding site. 135–137 (SRT) lines the 2-[(2R,5Z)-2-carboxy-4-methylthiazol-5(2H)-ylidene]ethyl phosphate pocket. Lysine 138 contributes to the 4-amino-2-methyl-5-(diphosphooxymethyl)pyrimidine binding site. Position 164 (glycine 164) interacts with 2-[(2R,5Z)-2-carboxy-4-methylthiazol-5(2H)-ylidene]ethyl phosphate.

Belongs to the thiamine-phosphate synthase family. Mg(2+) is required as a cofactor.

It carries out the reaction 2-[(2R,5Z)-2-carboxy-4-methylthiazol-5(2H)-ylidene]ethyl phosphate + 4-amino-2-methyl-5-(diphosphooxymethyl)pyrimidine + 2 H(+) = thiamine phosphate + CO2 + diphosphate. The enzyme catalyses 2-(2-carboxy-4-methylthiazol-5-yl)ethyl phosphate + 4-amino-2-methyl-5-(diphosphooxymethyl)pyrimidine + 2 H(+) = thiamine phosphate + CO2 + diphosphate. It catalyses the reaction 4-methyl-5-(2-phosphooxyethyl)-thiazole + 4-amino-2-methyl-5-(diphosphooxymethyl)pyrimidine + H(+) = thiamine phosphate + diphosphate. The protein operates within cofactor biosynthesis; thiamine diphosphate biosynthesis; thiamine phosphate from 4-amino-2-methyl-5-diphosphomethylpyrimidine and 4-methyl-5-(2-phosphoethyl)-thiazole: step 1/1. Its function is as follows. Condenses 4-methyl-5-(beta-hydroxyethyl)thiazole monophosphate (THZ-P) and 2-methyl-4-amino-5-hydroxymethyl pyrimidine pyrophosphate (HMP-PP) to form thiamine monophosphate (TMP). This Chromobacterium violaceum (strain ATCC 12472 / DSM 30191 / JCM 1249 / CCUG 213 / NBRC 12614 / NCIMB 9131 / NCTC 9757 / MK) protein is Thiamine-phosphate synthase.